A 32-amino-acid polypeptide reads, in one-letter code: MSLLVQVISLVVISVVVIIIPPCGAALGRIKA.

The sequence is that of ilv operon leader peptide (ilvL) from Edwardsiella tarda.